Consider the following 293-residue polypeptide: Small ribosomal subunit protein uS2 (293 aa).

Residues 219-293 (IASAKPDEPY…WATPKTEDWA (75 aa)) are disordered.

It belongs to the universal ribosomal protein uS2 family. As to quaternary structure, component of the small ribosomal subunit. Mature ribosomes consist of a small (40S) and a large (60S) subunit. The 40S subunit contains about 33 different proteins and 1 molecule of RNA (18S). The 60S subunit contains about 49 different proteins and 3 molecules of RNA (28S, 5.8S and 5S). Interacts with ribosomal protein S21.

It localises to the cytoplasm. Its function is as follows. Required for the assembly and/or stability of the 40S ribosomal subunit. Required for the processing of the 20S rRNA-precursor to mature 18S rRNA in a late step of the maturation of 40S ribosomal subunits. The protein is Small ribosomal subunit protein uS2 of Hydra viridissima (Green hydra).